A 66-amino-acid chain; its full sequence is Large ribosomal subunit protein uL29 (66 aa).

The protein belongs to the universal ribosomal protein uL29 family.

This Thermococcus sibiricus (strain DSM 12597 / MM 739) protein is Large ribosomal subunit protein uL29.